The primary structure comprises 74 residues: Kappa-stichotoxin-Sgt4a (74 aa).

A signal peptide spans 1–22 (MKFQVIAAVLLIEFCLCVVVTA). A propeptide spanning residues 23 to 39 (RMELQDVEDVENGFQKR) is cleaved from the precursor. One can recognise a ShKT domain in the interval 42-74 (CIDTIPQSRCTAFQCKHSMKYRLSFCRKTCGTC). 3 disulfide bridges follow: C42–C74, C51–C67, and C56–C71.

This sequence belongs to the sea anemone type 1 potassium channel toxin family. Type 1a subfamily.

It is found in the secreted. It localises to the nematocyst. In terms of biological role, inhibits voltage-gated potassium channels (Kv) with higher potency for Kv1.1/KCNA1 and Kv1.3/KCNA3. The sequence is that of Kappa-stichotoxin-Sgt4a from Stichodactyla gigantea (Giant carpet anemone).